Here is a 347-residue protein sequence, read N- to C-terminus: Histone deacetylase 11 (347 aa).

A histone deacetylase region spans residues 14-318 (TRWPIVYSPR…ARIIADSILN (305 aa)). Residue His143 is part of the active site.

This sequence belongs to the histone deacetylase family. Interacts with HDAC6.

It localises to the nucleus. The enzyme catalyses N(6)-acetyl-L-lysyl-[histone] + H2O = L-lysyl-[histone] + acetate. Functionally, responsible for the deacetylation of lysine residues on the N-terminal part of the core histones (H2A, H2B, H3 and H4). Histone deacetylation gives a tag for epigenetic repression and plays an important role in transcriptional regulation, cell cycle progression and developmental events. Histone deacetylases act via the formation of large multiprotein complexes. This Macaca fascicularis (Crab-eating macaque) protein is Histone deacetylase 11 (HDAC11).